A 273-amino-acid chain; its full sequence is Hemin import ATP-binding protein HmuV (273 aa).

The region spanning 2–256 is the ABC transporter domain; sequence LTAHHLDVAR…AHIAQCYGFA (255 aa). An ATP-binding site is contributed by 34–41; it reads GRNGAGKS.

It belongs to the ABC transporter superfamily. Heme (hemin) importer (TC 3.A.1.14.5) family. As to quaternary structure, the complex is composed of two ATP-binding proteins (HmuV), two transmembrane proteins (HmuU) and a solute-binding protein (HmuT).

Its subcellular location is the cell inner membrane. Functionally, part of the ABC transporter complex HmuTUV involved in hemin import. Responsible for energy coupling to the transport system. The sequence is that of Hemin import ATP-binding protein HmuV from Burkholderia lata (strain ATCC 17760 / DSM 23089 / LMG 22485 / NCIMB 9086 / R18194 / 383).